The primary structure comprises 695 residues: Elongation factor G (695 aa).

One can recognise a tr-type G domain in the interval 8–282; that stretch reads EKTRNIGIMA…AVLDYLPAPT (275 aa). Residues 17 to 24, 81 to 85, and 135 to 138 each bind GTP; these read AHIDAGKT, DTPGH, and NKMD.

Belongs to the TRAFAC class translation factor GTPase superfamily. Classic translation factor GTPase family. EF-G/EF-2 subfamily.

The protein resides in the cytoplasm. Its function is as follows. Catalyzes the GTP-dependent ribosomal translocation step during translation elongation. During this step, the ribosome changes from the pre-translocational (PRE) to the post-translocational (POST) state as the newly formed A-site-bound peptidyl-tRNA and P-site-bound deacylated tRNA move to the P and E sites, respectively. Catalyzes the coordinated movement of the two tRNA molecules, the mRNA and conformational changes in the ribosome. This is Elongation factor G from Listeria monocytogenes serotype 4b (strain CLIP80459).